Consider the following 134-residue polypeptide: Transcription antitermination protein NusB (134 aa).

This sequence belongs to the NusB family.

Involved in transcription antitermination. Required for transcription of ribosomal RNA (rRNA) genes. Binds specifically to the boxA antiterminator sequence of the ribosomal RNA (rrn) operons. The sequence is that of Transcription antitermination protein NusB from Shewanella sp. (strain W3-18-1).